Consider the following 313-residue polypeptide: tRNA dimethylallyltransferase (313 aa).

11–18 lines the ATP pocket; that stretch reads GPTAGGKT. A substrate-binding site is contributed by 13–18; the sequence is TAGGKT. Interaction with substrate tRNA regions lie at residues 36-39, 160-164, and 243-248; these read DSAL, QRIGR, and RCVGYR.

The protein belongs to the IPP transferase family. As to quaternary structure, monomer. Mg(2+) serves as cofactor.

It carries out the reaction adenosine(37) in tRNA + dimethylallyl diphosphate = N(6)-dimethylallyladenosine(37) in tRNA + diphosphate. Catalyzes the transfer of a dimethylallyl group onto the adenine at position 37 in tRNAs that read codons beginning with uridine, leading to the formation of N6-(dimethylallyl)adenosine (i(6)A). The protein is tRNA dimethylallyltransferase of Neisseria meningitidis serogroup A / serotype 4A (strain DSM 15465 / Z2491).